The sequence spans 299 residues: Very long chain fatty acid elongase 5 (299 aa).

M1 carries the post-translational modification N-acetylmethionine. Transmembrane regions (helical) follow at residues W26 to V46, I64 to V84, V112 to L132, M150 to A170, G205 to C225, and T226 to F246. The interval A275–D299 is disordered. Over residues G279 to E288 the composition is skewed to polar residues. S285 is subject to Phosphoserine.

Belongs to the ELO family. ELOVL5 subfamily. Interacts with TECR.

It is found in the endoplasmic reticulum membrane. The protein localises to the cell projection. Its subcellular location is the dendrite. It catalyses the reaction a very-long-chain acyl-CoA + malonyl-CoA + H(+) = a very-long-chain 3-oxoacyl-CoA + CO2 + CoA. The catalysed reaction is (6Z,9Z,12Z)-octadecatrienoyl-CoA + malonyl-CoA + H(+) = (8Z,11Z,14Z)-3-oxoeicosatrienoyl-CoA + CO2 + CoA. The enzyme catalyses (9Z,12Z,15Z)-octadecatrienoyl-CoA + malonyl-CoA + H(+) = (11Z,14Z,17Z)-3-oxoeicosatrienoyl-CoA + CO2 + CoA. It carries out the reaction (9Z)-hexadecenoyl-CoA + malonyl-CoA + H(+) = 3-oxo-(11Z)-octadecenoyl-CoA + CO2 + CoA. It catalyses the reaction (9Z)-octadecenoyl-CoA + malonyl-CoA + H(+) = 3-oxo-(11Z)-eicosenoyl-CoA + CO2 + CoA. The catalysed reaction is (11Z)-octadecenoyl-CoA + malonyl-CoA + H(+) = 3-oxo-(13Z)-eicosenoyl-CoA + CO2 + CoA. The enzyme catalyses (9Z,12Z)-octadecadienoyl-CoA + malonyl-CoA + H(+) = (11Z,14Z)-3-oxoicosa-11,14-dienoyl-CoA + CO2 + CoA. It carries out the reaction (6Z,9Z,12Z,15Z)-octadecatetraenoyl-CoA + malonyl-CoA + H(+) = (8Z,11Z,14Z,17Z)-3-oxoicosatetraenoyl-CoA + CO2 + CoA. It catalyses the reaction (5Z,8Z,11Z,14Z)-eicosatetraenoyl-CoA + malonyl-CoA + H(+) = (7Z,10Z,13Z,16Z)-3-oxodocosatetraenoyl-CoA + CO2 + CoA. The catalysed reaction is (5Z,8Z,11Z,14Z,17Z)-eicosapentaenoyl-CoA + malonyl-CoA + H(+) = 3-oxo-(7Z,10Z,13Z,16Z,19Z)-docosapentaenoyl-CoA + CO2 + CoA. Its pathway is lipid metabolism; polyunsaturated fatty acid biosynthesis. In terms of biological role, catalyzes the first and rate-limiting reaction of the four reactions that constitute the long-chain fatty acids elongation cycle. This endoplasmic reticulum-bound enzymatic process allows the addition of 2 carbons to the chain of long- and very long-chain fatty acids (VLCFAs) per cycle. Condensing enzyme that acts specifically toward polyunsaturated acyl-CoA with the higher activity toward C18:3(n-6) acyl-CoA. May participate in the production of monounsaturated and of polyunsaturated VLCFAs of different chain lengths that are involved in multiple biological processes as precursors of membrane lipids and lipid mediators. In conditions where the essential linoleic and alpha linoleic fatty acids are lacking it is also involved in the synthesis of Mead acid from oleic acid. In Macaca fascicularis (Crab-eating macaque), this protein is Very long chain fatty acid elongase 5.